Reading from the N-terminus, the 109-residue chain is Nucleoid-associated protein YbaB (109 aa).

This sequence belongs to the YbaB/EbfC family. Homodimer.

It is found in the cytoplasm. The protein resides in the nucleoid. Its function is as follows. Binds to DNA and alters its conformation. May be involved in regulation of gene expression, nucleoid organization and DNA protection. In Escherichia coli O127:H6 (strain E2348/69 / EPEC), this protein is Nucleoid-associated protein YbaB.